The following is an 807-amino-acid chain: Ribosomal RNA large subunit methyltransferase K/L (807 aa).

The THUMP domain occupies 67 to 182 (QIYKICLWSR…EKQAEIFLDL (116 aa)). The segment covering 548 to 560 (NTQYGNPEASAQS) has biased composition (polar residues). The interval 548-602 (NTQYGNPEASAQSKESKNAPEPKKDNRNRYKGNKFQQAREEAKRQEAQRLAQKKR) is disordered. 2 stretches are compositionally biased toward basic and acidic residues: residues 561 to 575 (KESKNAPEPKKDNRN) and 584 to 594 (QAREEAKRQEA).

This sequence belongs to the methyltransferase superfamily. RlmKL family.

It localises to the cytoplasm. The catalysed reaction is guanosine(2445) in 23S rRNA + S-adenosyl-L-methionine = N(2)-methylguanosine(2445) in 23S rRNA + S-adenosyl-L-homocysteine + H(+). The enzyme catalyses guanosine(2069) in 23S rRNA + S-adenosyl-L-methionine = N(2)-methylguanosine(2069) in 23S rRNA + S-adenosyl-L-homocysteine + H(+). Functionally, specifically methylates the guanine in position 2445 (m2G2445) and the guanine in position 2069 (m7G2069) of 23S rRNA. This Psychrobacter sp. (strain PRwf-1) protein is Ribosomal RNA large subunit methyltransferase K/L.